An 898-amino-acid chain; its full sequence is Cilium assembly protein DZIP1 (898 aa).

Residues Asp-14–Lys-66 form a disordered region. The span at Pro-25–Ser-46 shows a compositional bias: low complexity. Positions Thr-47–Ser-60 are enriched in polar residues. Residues Leu-145–Met-197 are a coiled coil. The segment at His-207–His-230 adopts a C2H2-type zinc-finger fold. Coiled coils occupy residues Asn-242–Gln-353 and Ser-407–Lys-447. The span at Thr-435–Pro-463 shows a compositional bias: polar residues. 3 disordered regions span residues Thr-435–Lys-509, Glu-585–Gly-739, and Lys-773–Thr-878. Over residues Ser-495–Arg-505 the composition is skewed to low complexity. A coiled-coil region spans residues Tyr-573–Glu-590. Polar residues predominate over residues Val-605–Leu-652. Acidic residues predominate over residues Ser-662–Ser-684. Composition is skewed to polar residues over residues Pro-685–Arg-715 and Ala-723–Ser-734. Residues Lys-797–Ser-815 are compositionally biased toward basic and acidic residues. Residues Asp-816 to Asp-826 show a composition bias toward acidic residues. Residues Asp-855–Gly-866 show a composition bias toward polar residues.

This sequence belongs to the DZIP C2H2-type zinc-finger protein family. As to expression, expressed throughout the embryo starting at 12 hours.

It localises to the cell projection. It is found in the cilium. The protein resides in the cytoplasm. The protein localises to the cytoskeleton. Its subcellular location is the cilium basal body. It localises to the microtubule organizing center. It is found in the centrosome. The protein resides in the centriole. The protein localises to the nucleus. Molecular adapter that recruits protein complexes required for cilium assembly and function to the cilium basal body. Required for establishment of left-right asymmetry during embryogenesis. Acts as a permissive factor that is required for the proper regulation of Hedgehog (Hh) target genes in response to Hh signals. Acts downstream of the Smoothened protein to modulate Gli activity in the somites of the developing embryo. The chain is Cilium assembly protein DZIP1 (dzip1) from Danio rerio (Zebrafish).